The chain runs to 437 residues: Trigger factor (437 aa).

Positions 161–246 (DDQVNIDFVG…VNSVSAPQLP (86 aa)) constitute a PPIase FKBP-type domain.

Belongs to the FKBP-type PPIase family. Tig subfamily.

The protein resides in the cytoplasm. It carries out the reaction [protein]-peptidylproline (omega=180) = [protein]-peptidylproline (omega=0). In terms of biological role, involved in protein export. Acts as a chaperone by maintaining the newly synthesized protein in an open conformation. Functions as a peptidyl-prolyl cis-trans isomerase. In Pseudomonas putida (strain W619), this protein is Trigger factor.